Consider the following 275-residue polypeptide: Calcium uniporter protein, mitochondrial (275 aa).

A mitochondrion-targeting transit peptide spans 1–28 (MNSFVIRNGFGLVRTFNTRLFTTSTQNL). Residues 29-165 (EGELKTILGQ…DRKAHRRATA (137 aa)) lie on the Mitochondrial matrix side of the membrane. Residues 125 to 157 (VGLNKLIESKKSEINSLRQKIQPLEEKKQVIDR) adopt a coiled-coil conformation. The chain crosses the membrane as a helical span at residues 166–186 (IIWTGLGYCFAQAAILARLTW). Over 187–192 (WDLSWD) the chain is Mitochondrial intermembrane. Residues 191-199 (WDIIEPVSY) carry the Selectivity filter motif. The helical transmembrane segment at 193–213 (IIEPVSYFLTFGSVLIGYTYF) threads the bilayer. Residue Glu195 participates in Ca(2+) binding. Residues 214-275 (TMTKTEFTYE…ELATKYDHTH (62 aa)) lie on the Mitochondrial matrix side of the membrane. Positions 244-270 (PKEDYENLVQAIDKKEKELKELELATK) form a coiled coil.

The protein belongs to the MCU (TC 1.A.77) family. Homooligomer.

The protein localises to the mitochondrion inner membrane. The catalysed reaction is Ca(2+)(in) = Ca(2+)(out). With respect to regulation, inhibited by ruthenium red or its derivative Ru360. Mitochondrial inner membrane calcium uniporter that mediates calcium uptake into mitochondria. Constitutes a pore-forming and calcium-conducting subunit. Mitochondrial calcium homeostasis plays key roles in cellular physiology and regulates cell bioenergetics, cytoplasmic calcium signals and activation of cell death pathways. Sufficient to operate as a pore-forming channel without the need of calcium-sensor or auxiliary subunit. In Dictyostelium discoideum (Social amoeba), this protein is Calcium uniporter protein, mitochondrial.